The primary structure comprises 607 residues: Guanine nucleotide-binding protein-like 1 (607 aa).

Residues Met-1 to Lys-14 are compositionally biased toward basic residues. Residues Met-1–Tyr-81 are disordered. Basic and acidic residues predominate over residues Gln-15–Leu-26. Ser-32, Ser-33, and Ser-34 each carry phosphoserine. 2 positions are modified to phosphothreonine: Thr-48 and Thr-50. A phosphoserine mark is found at Ser-51 and Ser-68. Residues Trp-178–Pro-418 enclose the CP-type G domain. Residue Asn-225 to Asp-228 coordinates GTP. Ser-324 bears the Phosphoserine mark. Residues Gly-367–Ser-374 and Asp-411–Leu-415 each bind GTP. The interval Gly-547–Cys-607 is disordered. Positions Gly-550–Thr-584 are enriched in acidic residues. A phosphoserine mark is found at Ser-561, Ser-562, and Ser-563.

Belongs to the TRAFAC class YlqF/YawG GTPase family.

Its function is as follows. Possible regulatory or functional link with the histocompatibility cluster. The chain is Guanine nucleotide-binding protein-like 1 (GNL1) from Pan troglodytes (Chimpanzee).